Consider the following 72-residue polypeptide: VKRPMNAFMVWSQHERRKIMDQWPDMHNAEISKRLGRRWQLLQDSEKIPFVKEAGGLRLKHMADYPDYKYRP.

Positions 1–69 form a DNA-binding region, HMG box; sequence VKRPMNAFMV…KHMADYPDYK (69 aa).

The protein localises to the nucleus. The chain is SRY-related protein ADW5 from Alligator mississippiensis (American alligator).